The chain runs to 282 residues: Virginiamycin B lyase (282 aa).

Substrate is bound at residue H217. Mg(2+) is bound at residue E256. The active-site Proton acceptor is H258. E273 serves as a coordination point for Mg(2+).

Belongs to the Vgb family. As to quaternary structure, monomer. The cofactor is Mg(2+).

Its function is as follows. Inactivates the type B streptogramin antibiotics by linearizing the lactone ring at the ester linkage, generating a free phenylglycine carboxylate and converting the threonyl moiety into 2-amino-butenoic acid. In Mycolicibacterium smegmatis (strain ATCC 700084 / mc(2)155) (Mycobacterium smegmatis), this protein is Virginiamycin B lyase.